Consider the following 590-residue polypeptide: Myo-inositol transporter 3 (590 aa).

Positions Met1–Glu26 are enriched in basic and acidic residues. Residues Met1 to Phe40 are disordered. Over Met1 to Lys57 the chain is Cytoplasmic. Residues Val58 to Tyr78 traverse the membrane as a helical segment. The Extracellular portion of the chain corresponds to Asp79 to Glu105. N-linked (GlcNAc...) asparagine glycosylation is present at Asn100. The chain crosses the membrane as a helical span at residues Ile106–Gly126. Residues Asp127 to Lys132 lie on the Cytoplasmic side of the membrane. The helical transmembrane segment at Met133–Tyr153 threads the bilayer. The Extracellular portion of the chain corresponds to Ser154 to Gln157. Residues Ile158–Leu178 form a helical membrane-spanning segment. The Cytoplasmic segment spans residues Phe179–Cys192. A helical transmembrane segment spans residues Ile193–Gly213. Topologically, residues Val214 to Arg222 are extracellular. A helical membrane pass occupies residues Leu223–Pro243. Over Glu244–Gln325 the chain is Cytoplasmic. A helical transmembrane segment spans residues Leu326 to Ser346. Residues Asn347–Ala349 lie on the Extracellular side of the membrane. A helical membrane pass occupies residues Leu350–Val370. Residues Asp371–Arg376 are Cytoplasmic-facing. The helical transmembrane segment at Gly377–Phe397 threads the bilayer. Topologically, residues Tyr398–Gly420 are extracellular. A helical transmembrane segment spans residues Ile421–Val441. Topologically, residues Trp442–Met455 are cytoplasmic. A helical membrane pass occupies residues Gly456–Leu476. At Ser477–Ser485 the chain is on the extracellular side. A helical transmembrane segment spans residues Gly486–Phe506. At Pro507 to Val590 the chain is on the cytoplasmic side.

This sequence belongs to the major facilitator superfamily. Sugar transporter (TC 2.A.1.1) family.

Its subcellular location is the cell membrane. The enzyme catalyses myo-inositol(out) + H(+)(out) = myo-inositol(in) + H(+)(in). Functionally, transporter for myo-inositol. This chain is Myo-inositol transporter 3, found in Cryptococcus neoformans var. grubii serotype A (strain H99 / ATCC 208821 / CBS 10515 / FGSC 9487) (Filobasidiella neoformans var. grubii).